Reading from the N-terminus, the 513-residue chain is ATP synthase subunit alpha (513 aa).

ATP is bound at residue 171-178 (GDRQIGKT).

It belongs to the ATPase alpha/beta chains family. F-type ATPases have 2 components, CF(1) - the catalytic core - and CF(0) - the membrane proton channel. CF(1) has five subunits: alpha(3), beta(3), gamma(1), delta(1), epsilon(1). CF(0) has three main subunits: a(1), b(2) and c(9-12). The alpha and beta chains form an alternating ring which encloses part of the gamma chain. CF(1) is attached to CF(0) by a central stalk formed by the gamma and epsilon chains, while a peripheral stalk is formed by the delta and b chains.

It is found in the cell membrane. The enzyme catalyses ATP + H2O + 4 H(+)(in) = ADP + phosphate + 5 H(+)(out). Functionally, produces ATP from ADP in the presence of a proton gradient across the membrane. The alpha chain is a regulatory subunit. In Wolbachia pipientis wMel, this protein is ATP synthase subunit alpha.